The primary structure comprises 396 residues: Protein btn1 (396 aa).

The next 8 membrane-spanning stretches (helical) occupy residues Cys-15–Leu-35, Gly-45–Leu-65, Ile-76–Val-96, Leu-138–Val-158, Thr-161–Pro-181, Phe-234–Pro-254, Leu-296–Thr-316, and Phe-321–Tyr-341.

It belongs to the battenin family.

Its subcellular location is the endoplasmic reticulum membrane. It localises to the vacuole membrane. Functionally, involved in vacuolar transport and vacuole pH homeostasis. Also required for cytokinesis. The sequence is that of Protein btn1 from Schizosaccharomyces pombe (strain 972 / ATCC 24843) (Fission yeast).